The sequence spans 249 residues: MGIEVISILVGGGNNYMHLFYDDDAAFCVDASNPRILLKALGINFKKSIYDEKEIFSMGEDRKKRRELVYLFTTHKHLDHSAGIRCISEESPNTKTISGFSGDICKSGDKFRFKDVEIECFHTPCHTVDSFCFYVGEKYLATGDTLLFLGCGKFFGGTPGQMIKNIEEIKKRVNHDAVLLYGHDYSEQNIRFTEEFYHVPEEIKKKKFLKLAEEIKYNPFFNLKKVSIEGSEEEVMGKLRERKNKFSKE.

Zn(2+)-binding residues include His75, His77, Asp79, His80, His126, Asp144, and His183. Residues 183–185 (HDY) and 240–243 (RERK) contribute to the substrate site.

It belongs to the metallo-beta-lactamase superfamily. Glyoxalase II family. It depends on Zn(2+) as a cofactor.

Its subcellular location is the cytoplasm. The protein localises to the nucleus. It carries out the reaction an S-(2-hydroxyacyl)glutathione + H2O = a 2-hydroxy carboxylate + glutathione + H(+). It participates in secondary metabolite metabolism; methylglyoxal degradation; (R)-lactate from methylglyoxal: step 2/2. Its function is as follows. Thiolesterase that catalyzes the hydrolysis of S-D-lactoyl-glutathione to form glutathione and D-lactic acid. This Encephalitozoon cuniculi (strain GB-M1) (Microsporidian parasite) protein is Probable hydroxyacylglutathione hydrolase ECU02_0580.